The following is a 409-amino-acid chain: Tyrosine--tRNA ligase (409 aa).

The 'HIGH' region signature appears at 43–52; sequence PTAPDLHLGH. Positions 227 to 231 match the 'KMSKS' region motif; the sequence is KMSKS. Lysine 230 contacts ATP. The region spanning 338–399 is the S4 RNA-binding domain; sequence LALPQLLKLA…GKRKFAKVTL (62 aa).

This sequence belongs to the class-I aminoacyl-tRNA synthetase family. TyrS type 2 subfamily. In terms of assembly, homodimer.

It localises to the cytoplasm. It catalyses the reaction tRNA(Tyr) + L-tyrosine + ATP = L-tyrosyl-tRNA(Tyr) + AMP + diphosphate + H(+). In terms of biological role, catalyzes the attachment of tyrosine to tRNA(Tyr) in a two-step reaction: tyrosine is first activated by ATP to form Tyr-AMP and then transferred to the acceptor end of tRNA(Tyr). The polypeptide is Tyrosine--tRNA ligase (Nitrosomonas europaea (strain ATCC 19718 / CIP 103999 / KCTC 2705 / NBRC 14298)).